We begin with the raw amino-acid sequence, 482 residues long: MFS-type transporter traF (482 aa).

The segment covering 1–14 (MTSGTEQATLNTEE) has biased composition (polar residues). Positions 1–22 (MTSGTEQATLNTEENGSDSDHL) are disordered. Residues Asn-15 and Asn-45 are each glycosylated (N-linked (GlcNAc...) asparagine). The next 9 helical transmembrane spans lie at 52–72 (VFIT…SSVM), 89–109 (LSIL…LLFG), 125–145 (VFLF…ATIF), 149–169 (FLCG…LADL), 176–196 (GIAV…GPLV), 209–229 (WTQW…FVFC), 275–295 (PILA…YLCF), 312–332 (IGSL…VIII), and 354–374 (LVPM…FAWT). The N-linked (GlcNAc...) asparagine glycan is linked to Asn-376. 3 helical membrane-spanning segments follow: residues 379 to 399 (LPWA…LLIF), 427 to 447 (LLGA…GVPW), and 448 to 468 (AMSL…LFFI).

It belongs to the major facilitator superfamily. CAR1 family.

It localises to the membrane. Functionally, MFS-type transporter; part of the tra gene cluster that produces terrestric acid. The clavatol biosynthesis cluster cla and the terrestric acid cluster tra are both involved in the production of peniphenones and penilactones. This is MFS-type transporter traF from Penicillium crustosum (Blue mold fungus).